A 373-amino-acid chain; its full sequence is Spermidine/putrescine import ATP-binding protein PotA (373 aa).

The ABC transporter domain occupies 6–236 (LSLSNLTKQF…PANLFTARFV (231 aa)). 38–45 (GPSGCGKT) contributes to the ATP binding site.

The protein belongs to the ABC transporter superfamily. Spermidine/putrescine importer (TC 3.A.1.11.1) family. As to quaternary structure, the complex is composed of two ATP-binding proteins (PotA), two transmembrane proteins (PotB and PotC) and a solute-binding protein (PotD).

The protein localises to the cell inner membrane. The catalysed reaction is ATP + H2O + polyamine-[polyamine-binding protein]Side 1 = ADP + phosphate + polyamineSide 2 + [polyamine-binding protein]Side 1.. Functionally, part of the ABC transporter complex PotABCD involved in spermidine/putrescine import. Responsible for energy coupling to the transport system. This chain is Spermidine/putrescine import ATP-binding protein PotA, found in Marinobacter nauticus (strain ATCC 700491 / DSM 11845 / VT8) (Marinobacter aquaeolei).